A 335-amino-acid chain; its full sequence is Legumin type B (335 aa).

Disordered stretches follow at residues 47 to 87 and 102 to 155; these read PETQ…GNSV and TEED…GRNG. The span at 105 to 118 shows a compositional bias: basic and acidic residues; the sequence is DTAKRLRSPRDKRN. The segment covering 135 to 144 has biased composition (acidic residues); it reads QQEEEEQEEE. The Cupin type-1 domain maps to 167-314; the sequence is ENIAQPARAD…AFGLRQRQVT (148 aa).

The protein belongs to the 11S seed storage protein (globulins) family. As to quaternary structure, hexamer; each subunit is composed of an acidic and a basic chain derived from a single precursor and linked by a disulfide bond.

Functionally, this protein found in the seeds of many leguminous and non-leguminous plants is the source of sulfur-containing amino acids in seed meals. This Vicia faba (Broad bean) protein is Legumin type B (LEB7).